Reading from the N-terminus, the 73-residue chain is Disintegrin trigramin-gamma (73 aa).

The Disintegrin domain maps to E1–A73. 6 disulfides stabilise this stretch: C6/C21, C8/C16, C15/C38, C29/C35, C34/C59, and C47/C66. The Cell attachment site motif lies at R51–D53.

This sequence belongs to the venom metalloproteinase (M12B) family. P-II subfamily. P-IIa sub-subfamily. In terms of assembly, monomer (disintegrin). In terms of tissue distribution, expressed by the venom gland.

The protein resides in the secreted. Its function is as follows. Inhibits fibrinogen interaction with platelets. Acts by binding to alpha-IIb/beta-3 (ITGA2B/ITGB3) on the platelet surface and inhibits aggregation induced by ADP, thrombin, platelet-activating factor and collagen. This chain is Disintegrin trigramin-gamma, found in Craspedocephalus gramineus (Bamboo pit viper).